We begin with the raw amino-acid sequence, 157 residues long: Probable succinate transporter subunit YjjB (157 aa).

A run of 4 helical transmembrane segments spans residues 6–26 (IILT…GFAM), 51–71 (VLMI…ILVG), 87–107 (VFTV…VAMI), and 129–149 (FLKA…PGLW).

This sequence belongs to the ThrE exporter (TC 2.A.79) family. The transporter is composed of YjjB and YjjP.

Its subcellular location is the cell inner membrane. Involved in succinate export with YjjP. Both proteins are required for export. The protein is Probable succinate transporter subunit YjjB of Proteus mirabilis (strain HI4320).